We begin with the raw amino-acid sequence, 405 residues long: DNA primase DnaG (405 aa).

In terms of domain architecture, Toprim spans 172–248; sequence DSIIVVEGRA…HIDYIARAPP (77 aa). Mg(2+)-binding residues include glutamate 178, aspartate 222, and aspartate 224. The disordered stretch occupies residues 279-302; that stretch reads AAGEKTESQMSPQQPQLTQTQPTT. Low complexity predominate over residues 290–302; that stretch reads PQQPQLTQTQPTT.

Belongs to the archaeal DnaG primase family. In terms of assembly, forms a ternary complex with MCM helicase and DNA. Component of the archaeal exosome complex. Mg(2+) is required as a cofactor.

It carries out the reaction ssDNA + n NTP = ssDNA/pppN(pN)n-1 hybrid + (n-1) diphosphate.. Functionally, RNA polymerase that catalyzes the synthesis of short RNA molecules used as primers for DNA polymerase during DNA replication. Also part of the exosome, which is a complex involved in RNA degradation. Acts as a poly(A)-binding protein that enhances the interaction between heteromeric, adenine-rich transcripts and the exosome. The chain is DNA primase DnaG from Pyrobaculum islandicum (strain DSM 4184 / JCM 9189 / GEO3).